The primary structure comprises 542 residues: DM7 family protein GG17591 (542 aa).

The span at 415–430 (GETQEMDEAHPTKEES) shows a compositional bias: basic and acidic residues. A disordered region spans residues 415–443 (GETQEMDEAHPTKEESKSEEEGEVQSGSQ).

Belongs to the DM7 family.

This is DM7 family protein GG17591 from Drosophila erecta (Fruit fly).